The chain runs to 445 residues: 3-phosphoshikimate 1-carboxyvinyltransferase (445 aa).

The 3-phosphoshikimate site is built by Lys-21, Ser-22, and Arg-26. Lys-21 is a binding site for phosphoenolpyruvate. Phosphoenolpyruvate-binding residues include Gly-92 and Arg-120. 3-phosphoshikimate-binding residues include Ser-165, Gln-166, Asp-307, and Lys-334. Gln-166 provides a ligand contact to phosphoenolpyruvate. Asp-307 serves as the catalytic Proton acceptor. Phosphoenolpyruvate contacts are provided by Arg-338, Arg-379, and Lys-405.

This sequence belongs to the EPSP synthase family. As to quaternary structure, monomer.

Its subcellular location is the cytoplasm. It carries out the reaction 3-phosphoshikimate + phosphoenolpyruvate = 5-O-(1-carboxyvinyl)-3-phosphoshikimate + phosphate. Its pathway is metabolic intermediate biosynthesis; chorismate biosynthesis; chorismate from D-erythrose 4-phosphate and phosphoenolpyruvate: step 6/7. Its function is as follows. Catalyzes the transfer of the enolpyruvyl moiety of phosphoenolpyruvate (PEP) to the 5-hydroxyl of shikimate-3-phosphate (S3P) to produce enolpyruvyl shikimate-3-phosphate and inorganic phosphate. The sequence is that of 3-phosphoshikimate 1-carboxyvinyltransferase from Chlamydia felis (strain Fe/C-56) (Chlamydophila felis).